The following is a 145-amino-acid chain: Peptide methionine sulfoxide reductase MsrB (145 aa).

Positions 4–127 (SDELKQRIGD…NSAALKFIPY (124 aa)) constitute a MsrB domain. Residue C116 is the Nucleophile of the active site.

Belongs to the MsrB Met sulfoxide reductase family.

The enzyme catalyses L-methionyl-[protein] + [thioredoxin]-disulfide + H2O = L-methionyl-(R)-S-oxide-[protein] + [thioredoxin]-dithiol. This chain is Peptide methionine sulfoxide reductase MsrB, found in Streptococcus pyogenes serotype M1.